Consider the following 351-residue polypeptide: MLTREKAIEFLNSNDTGPILEMLNLINGTNNGKNITYSKNAFIPVCNWCRNICGYCTFRAENFKIMTKNEVKEILLKADSLGCREALFTFGENVDENELVREKLIKMGYKNILEYLYDLCDWCLSNTNILPHTNCGILNYDELKYLRKVNVSMGLMLENSSERLCKTVAHEKSPGKNPKLRIEMIENAGKLKIPFTTGILIGIGETFEERINSIFEIKRMHEKYGHIQEVIIQNFRVKKGIPMENFIEPSPIEMFKMVMISKLILEDISIQVPPNLNRETGQLFLMGGIDDFGGVSPLTKDYVNPEAPWPDILELERFSNELGFKLKERLPIYEKYINENWIDSEILKKLI.

Residues 35–275 enclose the Radical SAM core domain; sequence ITYSKNAFIP…EDISIQVPPN (241 aa). Residues Cys49, Cys53, and Cys56 each contribute to the [4Fe-4S] cluster site.

Belongs to the radical SAM superfamily. CofG family. As to quaternary structure, consists of two subunits, CofG and CofH. Requires [4Fe-4S] cluster as cofactor.

It catalyses the reaction 5-amino-5-(4-hydroxybenzyl)-6-(D-ribitylimino)-5,6-dihydrouracil + S-adenosyl-L-methionine = 7,8-didemethyl-8-hydroxy-5-deazariboflavin + 5'-deoxyadenosine + L-methionine + NH4(+) + H(+). It participates in cofactor biosynthesis; coenzyme F0 biosynthesis. Its function is as follows. Catalyzes the radical-mediated synthesis of 7,8-didemethyl-8-hydroxy-5-deazariboflavin from 5-amino-5-(4-hydroxybenzyl)-6-(D-ribitylimino)-5,6-dihydrouracil. The chain is 7,8-didemethyl-8-hydroxy-5-deazariboflavin synthase from Methanococcus vannielii (strain ATCC 35089 / DSM 1224 / JCM 13029 / OCM 148 / SB).